The chain runs to 1072 residues: DNA-directed RNA polymerase subunit beta (1072 aa).

The protein belongs to the RNA polymerase beta chain family. In terms of assembly, in plastids the minimal PEP RNA polymerase catalytic core is composed of four subunits: alpha, beta, beta', and beta''. When a (nuclear-encoded) sigma factor is associated with the core the holoenzyme is formed, which can initiate transcription.

The protein localises to the plastid. It localises to the chloroplast. The enzyme catalyses RNA(n) + a ribonucleoside 5'-triphosphate = RNA(n+1) + diphosphate. DNA-dependent RNA polymerase catalyzes the transcription of DNA into RNA using the four ribonucleoside triphosphates as substrates. In Lobularia maritima (Sweet alyssum), this protein is DNA-directed RNA polymerase subunit beta.